Reading from the N-terminus, the 274-residue chain is Large ribosomal subunit protein uL2cz/uL2cy (274 aa).

The interval 225–274 is disordered; the sequence is NPVDHPHGGGEGRAPIGRKKPTTPWGYPALGRRSRKRKKYSDSFILRRRK.

It belongs to the universal ribosomal protein uL2 family. As to quaternary structure, part of the 50S ribosomal subunit.

The protein localises to the plastid. It localises to the chloroplast. In Dioscorea elephantipes (Elephant's foot yam), this protein is Large ribosomal subunit protein uL2cz/uL2cy (rpl2-A).